The sequence spans 297 residues: Phosphoribosylaminoimidazole-succinocarboxamide synthase (297 aa).

Belongs to the SAICAR synthetase family.

The catalysed reaction is 5-amino-1-(5-phospho-D-ribosyl)imidazole-4-carboxylate + L-aspartate + ATP = (2S)-2-[5-amino-1-(5-phospho-beta-D-ribosyl)imidazole-4-carboxamido]succinate + ADP + phosphate + 2 H(+). The protein operates within purine metabolism; IMP biosynthesis via de novo pathway; 5-amino-1-(5-phospho-D-ribosyl)imidazole-4-carboxamide from 5-amino-1-(5-phospho-D-ribosyl)imidazole-4-carboxylate: step 1/2. This chain is Phosphoribosylaminoimidazole-succinocarboxamide synthase, found in Saccharopolyspora erythraea (strain ATCC 11635 / DSM 40517 / JCM 4748 / NBRC 13426 / NCIMB 8594 / NRRL 2338).